A 282-amino-acid polypeptide reads, in one-letter code: Farnesyl diphosphate synthase (282 aa).

Positions 45, 48, and 77 each coordinate isopentenyl diphosphate. 2 residues coordinate Mg(2+): aspartate 84 and aspartate 90. Arginine 95 contacts (2E)-geranyl diphosphate. Arginine 96 is an isopentenyl diphosphate binding site. Positions 181, 182, and 220 each coordinate (2E)-geranyl diphosphate.

Belongs to the FPP/GGPP synthase family. Requires Mg(2+) as cofactor.

The protein resides in the cytoplasm. It catalyses the reaction isopentenyl diphosphate + (2E)-geranyl diphosphate = (2E,6E)-farnesyl diphosphate + diphosphate. This Buchnera aphidicola subsp. Acyrthosiphon pisum (strain APS) (Acyrthosiphon pisum symbiotic bacterium) protein is Farnesyl diphosphate synthase (ispA).